Here is a 254-residue protein sequence, read N- to C-terminus: Undecaprenyl-diphosphatase (254 aa).

8 helical membrane passes run Met1–Val21, Ala41–Tyr61, Leu75–Gly95, Leu96–Val116, Ile130–Ile150, Ala174–Met194, Thr210–Val230, and Asn234–Leu254.

It belongs to the UppP family.

It localises to the cell inner membrane. It carries out the reaction di-trans,octa-cis-undecaprenyl diphosphate + H2O = di-trans,octa-cis-undecaprenyl phosphate + phosphate + H(+). In terms of biological role, catalyzes the dephosphorylation of undecaprenyl diphosphate (UPP). Confers resistance to bacitracin. The polypeptide is Undecaprenyl-diphosphatase (Persephonella marina (strain DSM 14350 / EX-H1)).